A 501-amino-acid polypeptide reads, in one-letter code: uncharacterized protein (501 aa).

One can recognise a BAR domain in the interval 14–237; that stretch reads EKFGFDRQKT…GFSKKRDNVN (224 aa). At Thr-285 the chain carries Phosphothreonine. 2 disordered regions span residues 302 to 321 and 329 to 414; these read IASSNRTQHTEDNYNKDVSD and SAVD…RSYS. A compositionally biased stretch (basic and acidic residues) spans 309 to 320; that stretch reads QHTEDNYNKDVS. Over residues 390–402 the composition is skewed to polar residues; the sequence is SQCNVSPSPSNIS. Ser-414 bears the Phosphoserine mark. The 67-residue stretch at 421–487 folds into the SH3 domain; sequence SSRKVVRMKY…PSNYCVPAHP (67 aa).

It localises to the cytoplasm. This is an uncharacterized protein from Schizosaccharomyces pombe (strain 972 / ATCC 24843) (Fission yeast).